Here is a 283-residue protein sequence, read N- to C-terminus: MRCSAVSLGSGTIINAIATGFGSAFGVDLKIKADVELVDNGKKIINGISIDNPTLKPSLVERCVKNVLNYFEVDYSAKISTNGDIPIKSGLSSSSAASNAAVLATIGALGEKVDSDLVLDLAIKSSFEEKLTVTGAYDDATASYFGGITVCNNMERKILKKDEFKEDIKVIVLMPEFEKNVDVNRMKLIKDYVDMAFEKCIAGDYYKALFLNGLLYSSALNFPSNISVDALEAGAITAGLSGTGPSYVALCYSEDEKNVENALKKYGNTVITKPSTNGARILY.

86-96 (PIKSGLSSSSA) contacts ATP.

Belongs to the GHMP kinase family. Archaeal shikimate kinase subfamily.

It is found in the cytoplasm. The enzyme catalyses shikimate + ATP = 3-phosphoshikimate + ADP + H(+). Its pathway is metabolic intermediate biosynthesis; chorismate biosynthesis; chorismate from D-erythrose 4-phosphate and phosphoenolpyruvate: step 5/7. This is Shikimate kinase from Methanococcus maripaludis (strain C6 / ATCC BAA-1332).